The sequence spans 229 residues: Adenosylcobinamide-GDP ribazoletransferase (229 aa).

The next 6 membrane-spanning stretches (helical) occupy residues 31–51, 55–75, 111–131, 134–154, 176–196, and 208–228; these read AMLL…AVLA, AVEL…AASS, AGVL…ATLL, PLLA…VCCT, VAVL…LVLV, and GDVM…AWAA.

The protein belongs to the CobS family. Requires Mg(2+) as cofactor.

It localises to the cell membrane. It carries out the reaction alpha-ribazole + adenosylcob(III)inamide-GDP = adenosylcob(III)alamin + GMP + H(+). The enzyme catalyses alpha-ribazole 5'-phosphate + adenosylcob(III)inamide-GDP = adenosylcob(III)alamin 5'-phosphate + GMP + H(+). It functions in the pathway cofactor biosynthesis; adenosylcobalamin biosynthesis; adenosylcobalamin from cob(II)yrinate a,c-diamide: step 7/7. Joins adenosylcobinamide-GDP and alpha-ribazole to generate adenosylcobalamin (Ado-cobalamin). Also synthesizes adenosylcobalamin 5'-phosphate from adenosylcobinamide-GDP and alpha-ribazole 5'-phosphate. This Nocardioides sp. (strain ATCC BAA-499 / JS614) protein is Adenosylcobinamide-GDP ribazoletransferase.